The chain runs to 78 residues: U-scoloptoxin(04)-Er1b (78 aa).

The signal sequence occupies residues 1–24 (MTRHLIFAAVLLVCLFVCWNAVGA). Positions 25-28 (QDAR) are excised as a propeptide.

Belongs to the scoloptoxin-04 family. In terms of processing, contains 2 disulfide bonds. In terms of tissue distribution, expressed by the venom gland.

The protein resides in the secreted. This chain is U-scoloptoxin(04)-Er1b, found in Ethmostigmus rubripes (Giant centipede).